The following is a 126-amino-acid chain: uncharacterized protein (126 aa).

The next 2 membrane-spanning stretches (helical) occupy residues 21–43 (LIVWNIFVNLRLGVFLLLVRIFS) and 48–70 (SVTFLGLFRTLLPVGRICFLLLL).

It is found in the membrane. This is an uncharacterized protein from Saccharomyces cerevisiae (strain ATCC 204508 / S288c) (Baker's yeast).